The sequence spans 601 residues: Glutathione-regulated potassium-efflux system protein KefB (601 aa).

The next 13 helical transmembrane spans lie at 5-25, 29-49, 55-75, 87-107, 115-135, 152-172, 177-197, 207-227, 230-250, 261-281, 284-304, 326-346, and 356-376; these read DLLL…PLAA, IGAV…GLGF, EILH…GLEL, IFGV…GLLM, AAVI…LQLM, VLLF…LLAG, HFDW…LIGG, FIAA…LVLG, LFMD…GILL, IAID…VGMA, LGVL…LVAV, FAGV…TAAS, and ALLL…MKLI. The region spanning 400–518 is the RCK N-terminal domain; that stretch reads KPQVIVVGFG…QAGVTNFSRE (119 aa).

The protein belongs to the monovalent cation:proton antiporter 2 (CPA2) transporter (TC 2.A.37) family. KefB subfamily. As to quaternary structure, interacts with the regulatory subunit KefG.

The protein localises to the cell inner membrane. Functionally, pore-forming subunit of a potassium efflux system that confers protection against electrophiles. Catalyzes K(+)/H(+) antiport. The protein is Glutathione-regulated potassium-efflux system protein KefB of Enterobacter sp. (strain 638).